Reading from the N-terminus, the 628-residue chain is Nuclear RNA export factor 1 (628 aa).

The disordered stretch occupies residues 47-83 (DTQSRYEDDDEPAVPVRASLTSASSRGRGGSSRGFGQ). Positions 63-72 (RASLTSASSR) are enriched in low complexity. The RRM domain occupies 100–179 (YKCRATGAAK…EFYTSKVPAP (80 aa)). LRR repeat units lie at residues 245–270 (NIVALSLSNNRIRHLDYASALVSIAK) and 271–294 (FVMELDLSHNHISTEKELEKFAGL). The 162-residue stretch at 365 to 526 (LVEQFVTSYF…VAVISDQLFI (162 aa)) folds into the NTF2 domain. One can recognise a TAP-C domain in the interval 576 to 628 (PIREEMIKAMCQFSGMIPPFSEKCLADCAWNFDFACQKFNEIKSSVPAEAFAH).

It belongs to the NXF family. In terms of assembly, interacts with nucleoporins, Nup98, Nup153 and Nup214.

It localises to the nucleus. Involved in RNA export from the nucleus to the cytoplasm. In Caenorhabditis elegans, this protein is Nuclear RNA export factor 1 (nxf-1).